We begin with the raw amino-acid sequence, 125 residues long: NADPH-dependent 7-cyano-7-deazaguanine reductase (125 aa).

Cysteine 41 functions as the Thioimide intermediate in the catalytic mechanism. The active-site Proton donor is the aspartate 48. Residues 63–65 (VEL) and 82–83 (HE) contribute to the substrate site.

It belongs to the GTP cyclohydrolase I family. QueF type 1 subfamily.

It is found in the cytoplasm. The enzyme catalyses 7-aminomethyl-7-carbaguanine + 2 NADP(+) = 7-cyano-7-deazaguanine + 2 NADPH + 3 H(+). The protein operates within tRNA modification; tRNA-queuosine biosynthesis. In terms of biological role, catalyzes the NADPH-dependent reduction of 7-cyano-7-deazaguanine (preQ0) to 7-aminomethyl-7-deazaguanine (preQ1). This Sulfurimonas denitrificans (strain ATCC 33889 / DSM 1251) (Thiomicrospira denitrificans (strain ATCC 33889 / DSM 1251)) protein is NADPH-dependent 7-cyano-7-deazaguanine reductase.